We begin with the raw amino-acid sequence, 297 residues long: Bifunctional protein FolD 2 (297 aa).

Residues G164 to S166, S193, and I234 each bind NADP(+).

This sequence belongs to the tetrahydrofolate dehydrogenase/cyclohydrolase family. As to quaternary structure, homodimer.

The catalysed reaction is (6R)-5,10-methylene-5,6,7,8-tetrahydrofolate + NADP(+) = (6R)-5,10-methenyltetrahydrofolate + NADPH. It carries out the reaction (6R)-5,10-methenyltetrahydrofolate + H2O = (6R)-10-formyltetrahydrofolate + H(+). It functions in the pathway one-carbon metabolism; tetrahydrofolate interconversion. Its function is as follows. Catalyzes the oxidation of 5,10-methylenetetrahydrofolate to 5,10-methenyltetrahydrofolate and then the hydrolysis of 5,10-methenyltetrahydrofolate to 10-formyltetrahydrofolate. This Haloarcula marismortui (strain ATCC 43049 / DSM 3752 / JCM 8966 / VKM B-1809) (Halobacterium marismortui) protein is Bifunctional protein FolD 2.